The primary structure comprises 227 residues: MENLKKMAGIKAAEFVSDGMVVGLGTGSTAYYFVEEIGRRIKEEGLQITAVTTSSVTTKQAEGLNIPLKSIDQVDFVDVTVDGADEVDSQFNGIKGGGGALLMEKVVATPSKEYIWVVDESKLVEKLGAFKLPVEVVQYGAEQVFRHFERAGYKPSFREKDGQRFVTDMQNFIIDLALDVIENPIAFGQELDHVVGVVEHGLFNQMVDKVIVAGRDGVQISTSKKGK.

Substrate is bound by residues 26–29 (TGST), 82–85 (DGAD), and 95–98 (KGGG). The active-site Proton acceptor is Glu-104. Substrate is bound at residue Lys-122.

This sequence belongs to the ribose 5-phosphate isomerase family. Homodimer.

The catalysed reaction is aldehydo-D-ribose 5-phosphate = D-ribulose 5-phosphate. The protein operates within carbohydrate degradation; pentose phosphate pathway; D-ribose 5-phosphate from D-ribulose 5-phosphate (non-oxidative stage): step 1/1. In terms of biological role, catalyzes the reversible conversion of ribose-5-phosphate to ribulose 5-phosphate. This chain is Ribose-5-phosphate isomerase A, found in Streptococcus pneumoniae serotype 2 (strain D39 / NCTC 7466).